The primary structure comprises 506 residues: Transforming growth factor beta-1-induced transcript 1 protein (506 aa).

The LD motif 1 signature appears at 3–15 (DLDALLADLQITT). Positions 15–62 (TPPRCPVLLTDSPEKPQPTETRPPPPPYDPKTAMSNKTSDHETFPVDK) are disordered. A compositionally biased stretch (basic and acidic residues) spans 52-62 (TSDHETFPVDK). 2 consecutive short sequence motifs (LD motif) follow at residues 87–99 (ELDR…NATQ) and 139–150 (ELDRLMASLSDF). Disordered stretches follow at residues 154-201 (NTVS…PTPK) and 221-244 (SDEV…ATSV). Residues 168-177 (GSEEVSRPGD) show a composition bias toward basic and acidic residues. The short motif at 248–260 (DLDSMLVKLQSGL) is the LD motif 4 element. 4 consecutive LIM zinc-binding domains span residues 271 to 330 (GLCE…LYAP), 331 to 388 (RCAL…RLFG), 389 to 448 (AVCA…RRGS), and 449 to 506 (LCAG…RLYG).

The protein belongs to the paxillin family. As to quaternary structure, interacts with tcf3 and tcf7l2.

The protein resides in the cell junction. It is found in the focal adhesion. It localises to the nucleus matrix. Its subcellular location is the cytoplasm. The protein localises to the cytoskeleton. In terms of biological role, functions as a molecular adapter coordinating multiple protein-protein interactions at the focal adhesion complex and in the nucleus. May regulate both Wnt and steroid signaling pathways and play a role in the processes of cell growth, proliferation, migration, differentiation and senescence. May have a zinc-dependent DNA-binding activity. The sequence is that of Transforming growth factor beta-1-induced transcript 1 protein (tgfb1i1) from Xenopus laevis (African clawed frog).